The chain runs to 675 residues: DNA ligase (675 aa).

NAD(+) contacts are provided by residues D34 to D38, S83 to L84, and E117. The active-site N6-AMP-lysine intermediate is the K119. Residues R140, E184, K297, and K321 each contribute to the NAD(+) site. Residues C415, C418, C433, and C439 each coordinate Zn(2+). Residues L598–F675 enclose the BRCT domain.

The protein belongs to the NAD-dependent DNA ligase family. LigA subfamily. The cofactor is Mg(2+). Requires Mn(2+) as cofactor.

The enzyme catalyses NAD(+) + (deoxyribonucleotide)n-3'-hydroxyl + 5'-phospho-(deoxyribonucleotide)m = (deoxyribonucleotide)n+m + AMP + beta-nicotinamide D-nucleotide.. Its function is as follows. DNA ligase that catalyzes the formation of phosphodiester linkages between 5'-phosphoryl and 3'-hydroxyl groups in double-stranded DNA using NAD as a coenzyme and as the energy source for the reaction. It is essential for DNA replication and repair of damaged DNA. The polypeptide is DNA ligase (Prosthecochloris aestuarii (strain DSM 271 / SK 413)).